The chain runs to 247 residues: Uridylate kinase (247 aa).

18-21 (KLSG) is an ATP binding site. Glycine 60 provides a ligand contact to UMP. ATP contacts are provided by glycine 61 and arginine 65. UMP-binding positions include aspartate 80 and 141-148 (TGNPFFTT). 3 residues coordinate ATP: threonine 168, tyrosine 174, and aspartate 177.

This sequence belongs to the UMP kinase family. In terms of assembly, homohexamer.

The protein resides in the cytoplasm. It catalyses the reaction UMP + ATP = UDP + ADP. Its pathway is pyrimidine metabolism; CTP biosynthesis via de novo pathway; UDP from UMP (UMPK route): step 1/1. Its activity is regulated as follows. Inhibited by UTP. Catalyzes the reversible phosphorylation of UMP to UDP. The polypeptide is Uridylate kinase (Pseudomonas putida (strain ATCC 47054 / DSM 6125 / CFBP 8728 / NCIMB 11950 / KT2440)).